The following is a 92-amino-acid chain: Small ribosomal subunit protein uS17 (92 aa).

The protein belongs to the universal ribosomal protein uS17 family. As to quaternary structure, part of the 30S ribosomal subunit.

Its function is as follows. One of the primary rRNA binding proteins, it binds specifically to the 5'-end of 16S ribosomal RNA. This Bordetella petrii (strain ATCC BAA-461 / DSM 12804 / CCUG 43448) protein is Small ribosomal subunit protein uS17.